The sequence spans 58 residues: MRCLPVFVILLLLIASVPSVDAELKAKDDMPQASFHDNAERDQQKKTSDCCFYHNCCC.

The first 22 residues, 1–22, serve as a signal peptide directing secretion; it reads MRCLPVFVILLLLIASVPSVDA. The propeptide occupies 23-46; the sequence is ELKAKDDMPQASFHDNAERDQQKK.

In terms of assembly, homodimer; disulfide-linked. In terms of processing, 5 disulfide bonds are present in each homodimer: two intrachain disulfide bonds per subunit, and one interchain disulfide bond linking the two subunits. In terms of tissue distribution, expressed by the venom duct.

Its subcellular location is the secreted. This Conus textile (Cloth-of-gold cone) protein is Conotoxin TxXIIIA.